A 218-amino-acid chain; its full sequence is Small ribosomal subunit protein uS3c (218 aa).

The 71-residue stretch at Ile-39–Lys-109 folds into the KH type-2 domain.

This sequence belongs to the universal ribosomal protein uS3 family. As to quaternary structure, part of the 30S ribosomal subunit.

It is found in the plastid. The protein localises to the chloroplast. The protein is Small ribosomal subunit protein uS3c (rps3) of Rhodomonas salina (Cryptomonas salina).